Reading from the N-terminus, the 386-residue chain is MKNFILLAVSSILLVDLFPTHCGHNVDLSKAINLNGVNFNNVDASSLGAAHVGQSASRGRGLGENPDDEEGDAKKKKDGKKAEPKNPRENKLKQPGDRADGQPAGDRADGQPAGDRADGQPAGDRADGQPAGDRADGQPAGDRAAGQPAGDRADGQPAGDRADGQPAGDRAAGQPAGDRAAGQPAGDRADGQPAGDRADGQPAGDRADGQPAGDRAAGQPAGDRAAGQPAGDRAAGQPAGDRAAGQPAGDRAAGQPAGDRAAGQPAGDRAAGQPAGNGAGGQAAGGNAGGQGQNNEGANAPNEKSVKEYLDKVRATVGTEWTPCSVTCGVGVRVRRRVNAANKKPEDLTLNDLETDVCTMDKCAGIFNVVSNSLGLVILLVLALFN.

The N-terminal stretch at Met1 to Cys22 is a signal peptide. The tract at residues His51–Lys304 is disordered. The segment covering Asp72–Asp100 has biased composition (basic and acidic residues). The required for the binding to heparan sulfate proteoglycans (HSPGs) on the surface of host hepatocytes stretch occupies residues Lys80–Arg88. Residues Lys91–Pro95 are region I; contains the proteolytic cleavage site. A run of 20 repeats spans residues Gly96–Ala104, Gly105–Ala113, Gly114–Ala122, Gly123–Ala131, Gly132–Ala140, Gly141–Ala149, Gly150–Ala158, Gly159–Ala167, Gly168–Ala176, Gly177–Ala185, Gly186–Ala194, Gly195–Ala203, Gly204–Ala212, Gly213–Ala221, Gly222–Ala230, Gly231–Ala239, Gly240–Ala248, Gly249–Ala257, Gly258–Ala266, and Gly267–Ala275. The interval Gly96–Ala275 is 20 X 9 AA tandem repeats of G-D-R-A-[AD]-G-Q-P-A. The segment covering Ala275–Gly292 has biased composition (gly residues). The span at Gln293–Glu303 shows a compositional bias: low complexity. The TSP type-1 domain occupies Lys312–Ala364. Intrachain disulfides connect Cys324–Cys358 and Cys328–Cys363. Thr327 carries an O-linked (Fuc) threonine glycan. Cys363 carries GPI-anchor amidated cysteine lipidation. Residues Ala364–Asn386 constitute a propeptide, removed in mature form.

This sequence belongs to the plasmodium circumsporozoite protein family. In terms of processing, during host cell invasion, proteolytically cleaved at the cell membrane in the region I by a papain-like cysteine protease of parasite origin. Cleavage is triggered by the sporozoite contact with highly sulfated heparan sulfate proteoglycans (HSPGs) present on the host hepatocyte cell surface. Cleavage exposes the TSP type-1 (TSR) domain and is required for productive invasion of host hepatocytes but not for adhesion to the host cell membrane. Cleavage is dispensable for sporozoite development in the oocyst, motility and for traversal of host and vector cells. O-glycosylated; maybe by POFUT2.

The protein resides in the cell membrane. It is found in the cytoplasm. In terms of biological role, essential sporozoite protein. In the mosquito vector, required for sporozoite development in the oocyst, migration through the vector hemolymph and entry into the vector salivary glands. In the vertebrate host, required for sporozoite migration through the host dermis and infection of host hepatocytes. Binds to highly sulfated heparan sulfate proteoglycans (HSPGs) on the surface of host hepatocytes. Functionally, in the vertebrate host, binds to highly sulfated heparan sulfate proteoglycans (HSPGs) on the surface of host hepatocytes and is required for sporozoite invasion of the host hepatocytes. The polypeptide is Circumsporozoite protein (Plasmodium simium).